Reading from the N-terminus, the 747-residue chain is Probable cyclic nucleotide-gated ion channel 6 (747 aa).

Topologically, residues 1 to 117 (MFDTCGPKGV…DKFLLLCNKL (117 aa)) are cytoplasmic. Residues 118-138 (FVASCILAVSVDPLFLYLPFI) form a helical membrane-spanning segment. Topologically, residues 139–150 (NDKAKCVGIDRK) are extracellular. A helical transmembrane segment spans residues 151–171 (LAIIVTTIRTVIDSFYLFHMA). Over 172 to 205 (LRFRTAYVAPSSRVFGRGELVIDPAQIAKRYLQQ) the chain is Cytoplasmic. The chain crosses the membrane as a helical span at residues 206–226 (YFIIDLLSVLPVPQIIVWRFL). The Extracellular segment spans residues 227-239 (YTSRGANVLATKQ). Residues 240-260 (ALRYIVLVQYIPRFLRMYPLS) form a helical membrane-spanning segment. Over 261–280 (SELKRTAGVFAETAWAGAAY) the chain is Cytoplasmic. The chain crosses the membrane as a helical span at residues 281 to 301 (YLLLYMLASHIVGALWYLLAL). Topologically, residues 302–407 (ERNNDCWSKA…GQGLETSTYP (106 aa)) are extracellular. A helical membrane pass occupies residues 408–428 (GEVIFSITLAIAGLLLFALLI). At 429 to 747 (GNMQTYLQSL…PEPDFSAEDH (319 aa)) the chain is on the cytoplasmic side. Residues 514-638 (LFEN…SRQV) and D585 contribute to the a nucleoside 3',5'-cyclic phosphate site. Residues 630-645 (FRRLHSRQVQHTFRFY) form a calmodulin-binding region. An IQ domain is found at 650-679 (RTWAACFMQAAWRRYIKRKKLEQLRKEEEE).

It belongs to the cyclic nucleotide-gated cation channel (TC 1.A.1.5) family. As to quaternary structure, homotetramer or heterotetramer.

The protein resides in the cell membrane. Functionally, probable cyclic nucleotide-gated ion channel. This is Probable cyclic nucleotide-gated ion channel 6 (CNGC6) from Arabidopsis thaliana (Mouse-ear cress).